Reading from the N-terminus, the 228-residue chain is Isoprenyl transferase (228 aa).

The active site involves D15. Position 15 (D15) interacts with Mg(2+). Substrate contacts are provided by residues 16 to 19 (GNGR), W20, R28, H32, and 60 to 62 (STE). N63 (proton acceptor) is an active-site residue. Substrate-binding positions include W64, R66, R176, and 182–184 (RLS). E195 contributes to the Mg(2+) binding site.

This sequence belongs to the UPP synthase family. Homodimer. Requires Mg(2+) as cofactor.

In terms of biological role, catalyzes the condensation of isopentenyl diphosphate (IPP) with allylic pyrophosphates generating different type of terpenoids. The polypeptide is Isoprenyl transferase (Wolinella succinogenes (strain ATCC 29543 / DSM 1740 / CCUG 13145 / JCM 31913 / LMG 7466 / NCTC 11488 / FDC 602W) (Vibrio succinogenes)).